The chain runs to 192 residues: uncharacterized protein (192 aa).

This is an uncharacterized protein from Sinorhizobium fredii (strain NBRC 101917 / NGR234).